The sequence spans 189 residues: Alanine and glycine-rich protein (189 aa).

The span at alanine 127–glycine 160 shows a compositional bias: gly residues. The tract at residues alanine 127–arginine 170 is disordered.

As to expression, component of the organic matrix of calcified shell layers like nacre and prisms.

Its subcellular location is the secreted. The sequence is that of Alanine and glycine-rich protein from Mytilus californianus (California mussel).